We begin with the raw amino-acid sequence, 290 residues long: Ribosomal RNA small subunit methyltransferase A (290 aa).

Asn-27, Leu-29, Gly-54, Glu-75, Asp-100, and Asn-125 together coordinate S-adenosyl-L-methionine.

It belongs to the class I-like SAM-binding methyltransferase superfamily. rRNA adenine N(6)-methyltransferase family. RsmA subfamily.

Its subcellular location is the cytoplasm. The enzyme catalyses adenosine(1518)/adenosine(1519) in 16S rRNA + 4 S-adenosyl-L-methionine = N(6)-dimethyladenosine(1518)/N(6)-dimethyladenosine(1519) in 16S rRNA + 4 S-adenosyl-L-homocysteine + 4 H(+). In terms of biological role, specifically dimethylates two adjacent adenosines (A1518 and A1519) in the loop of a conserved hairpin near the 3'-end of 16S rRNA in the 30S particle. May play a critical role in biogenesis of 30S subunits. The sequence is that of Ribosomal RNA small subunit methyltransferase A from Streptococcus thermophilus (strain ATCC BAA-491 / LMD-9).